We begin with the raw amino-acid sequence, 558 residues long: CTP synthase (558 aa).

Residues 1-267 (MAKFVFVTGG…CLEMLDVLNL (267 aa)) form an amidoligase domain region. S13 contributes to the CTP binding site. S13 contacts UTP. ATP-binding positions include 14–19 (SIGKGI) and D71. D71 and E141 together coordinate Mg(2+). Residues 148 to 150 (DIE), 188 to 193 (KTKPTQ), and K224 each bind CTP. Residues 188 to 193 (KTKPTQ) and K224 contribute to the UTP site. Residues 292–534 (KVALVGKYVQ…IEAAQLRLPA (243 aa)) enclose the Glutamine amidotransferase type-1 domain. Residue G354 participates in L-glutamine binding. C381 serves as the catalytic Nucleophile; for glutamine hydrolysis. L-glutamine is bound by residues 382 to 385 (LGMQ), E405, and R462. Active-site residues include H507 and E509. A disordered region spans residues 536–558 (PDEALRRQSQTNISAQEQPSRIG). Residues 542–558 (RQSQTNISAQEQPSRIG) are compositionally biased toward polar residues.

The protein belongs to the CTP synthase family. As to quaternary structure, homotetramer.

It carries out the reaction UTP + L-glutamine + ATP + H2O = CTP + L-glutamate + ADP + phosphate + 2 H(+). It catalyses the reaction L-glutamine + H2O = L-glutamate + NH4(+). The catalysed reaction is UTP + NH4(+) + ATP = CTP + ADP + phosphate + 2 H(+). It participates in pyrimidine metabolism; CTP biosynthesis via de novo pathway; CTP from UDP: step 2/2. Allosterically activated by GTP, when glutamine is the substrate; GTP has no effect on the reaction when ammonia is the substrate. The allosteric effector GTP functions by stabilizing the protein conformation that binds the tetrahedral intermediate(s) formed during glutamine hydrolysis. Inhibited by the product CTP, via allosteric rather than competitive inhibition. In terms of biological role, catalyzes the ATP-dependent amination of UTP to CTP with either L-glutamine or ammonia as the source of nitrogen. Regulates intracellular CTP levels through interactions with the four ribonucleotide triphosphates. This chain is CTP synthase, found in Prochlorococcus marinus (strain MIT 9313).